A 133-amino-acid chain; its full sequence is Protein U17 (133 aa).

Residues 82–102 (FVSVLWCVILVFVVKIKLFFL) traverse the membrane as a helical segment.

The protein resides in the membrane. The protein is Protein U17 (U17/U16) of Homo sapiens (Human).